The sequence spans 370 residues: DNA polymerase IV (370 aa).

The region spanning 14 to 198 (IIHIDMDAFF…LPIEKFYGVG (185 aa)) is the UmuC domain. Mg(2+) is bound by residues aspartate 18 and aspartate 116. Glutamate 117 is a catalytic residue.

This sequence belongs to the DNA polymerase type-Y family. Monomer. The cofactor is Mg(2+).

The protein resides in the cytoplasm. The enzyme catalyses DNA(n) + a 2'-deoxyribonucleoside 5'-triphosphate = DNA(n+1) + diphosphate. Poorly processive, error-prone DNA polymerase involved in untargeted mutagenesis. Copies undamaged DNA at stalled replication forks, which arise in vivo from mismatched or misaligned primer ends. These misaligned primers can be extended by PolIV. Exhibits no 3'-5' exonuclease (proofreading) activity. May be involved in translesional synthesis, in conjunction with the beta clamp from PolIII. The chain is DNA polymerase IV from Streptococcus mutans serotype c (strain ATCC 700610 / UA159).